The chain runs to 347 residues: GMP reductase (347 aa).

NADP(+) is bound at residue 108–131 (ADFEKTKQILDLNPALNFVCIDVA). Residues Gly181 and Gly183 each coordinate K(+). Cys186 acts as the Thioimidate intermediate in catalysis. Residue 216 to 239 (IVSDGGCTTPGDVAKAFGGGADFV) participates in NADP(+) binding.

This sequence belongs to the IMPDH/GMPR family. GuaC type 1 subfamily. In terms of assembly, homotetramer.

The catalysed reaction is IMP + NH4(+) + NADP(+) = GMP + NADPH + 2 H(+). Its function is as follows. Catalyzes the irreversible NADPH-dependent deamination of GMP to IMP. It functions in the conversion of nucleobase, nucleoside and nucleotide derivatives of G to A nucleotides, and in maintaining the intracellular balance of A and G nucleotides. This is GMP reductase from Escherichia coli O139:H28 (strain E24377A / ETEC).